Reading from the N-terminus, the 373-residue chain is Trifolitoxin-processing protein TfxB (373 aa).

It to E.coli McbC which is involved in the processing of microcin B17 (MCCB17).

It is found in the cytoplasm. Functionally, the actions of the proteins TfxB, TfxD and TfxF are implicated in the processing of the inactive trifolitoxin (TfxA) precursor into the active peptide. This is Trifolitoxin-processing protein TfxB (tfxB) from Rhizobium leguminosarum bv. trifolii.